The chain runs to 412 residues: Angiopoietin-related protein 4 (412 aa).

The N-terminal stretch at 1–23 (MRSAPTARAALVLCAATAGLLSA) is a signal peptide. Residues 106-153 (ETLHSLQTQLKAQNSKIQQLFQKVAQQQRHLEKQHLRIQNLQGQLDHL) are a coiled coil. N183 is a glycosylation site (N-linked (GlcNAc...) asparagine). Residues 185-407 (SRLHRLPRDC…ATTMLIQPTV (223 aa)) enclose the Fibrinogen C-terminal domain. 2 cysteine pairs are disulfide-bonded: C194–C222 and C347–C360.

As to quaternary structure, homooligomer; disulfide-linked via Cys residues in the N-terminal part of the protein. The homooligomer undergoes proteolytic processing to release the ANGPTL4 C-terminal chain, which circulates as a monomer. The homooligomer unprocessed form is able to interact with the extracellular matrix. Post-translationally, N-glycosylated. In terms of processing, forms disulfide-linked dimers and tetramers. Cleaved into a smaller N-terminal chain and a larger chain that contains the fibrinogen C-terminal domain; both cleaved and uncleaved forms are detected in the extracellular space. The cleaved form is not present within the cell.

The protein localises to the secreted. The protein resides in the extracellular space. It localises to the extracellular matrix. Mediates inactivation of the lipoprotein lipase LPL, and thereby plays a role in the regulation of triglyceride clearance from the blood serum and in lipid metabolism. May also play a role in regulating glucose homeostasis and insulin sensitivity. Inhibits proliferation, migration, and tubule formation of endothelial cells and reduces vascular leakage. Upon heterologous expression, inhibits the adhesion of endothelial cell to the extracellular matrix (ECM), and inhibits the reorganization of the actin cytoskeleton, formation of actin stress fibers and focal adhesions in endothelial cells that have adhered to ANGPTL4-containing ECM (in vitro). Depending on context, may modulate tumor-related angiogenesis. In terms of biological role, mediates inactivation of the lipoprotein lipase LPL, and thereby plays an important role in the regulation of triglyceride clearance from the blood serum and in lipid metabolism. Has higher activity in LPL inactivation than the uncleaved protein. The chain is Angiopoietin-related protein 4 (ANGPTL4) from Sus scrofa (Pig).